A 160-amino-acid chain; its full sequence is Calsequestrin-2 (160 aa).

It belongs to the calsequestrin family. Monomer, homodimer and homooligomer. Mostly monomeric in the absence of calcium. Forms higher oligomers in a calcium-dependent manner. Dimers associate to form tetramers, that then form linear homomer chains. Interacts with ASPH and TRDN. Phosphorylation in the C-terminus, probably by CK2, moderately increases calcium buffering capacity. Post-translationally, N-glycosylated.

It localises to the sarcoplasmic reticulum lumen. Functionally, calsequestrin is a high-capacity, moderate affinity, calcium-binding protein and thus acts as an internal calcium store in muscle. Calcium ions are bound by clusters of acidic residues at the protein surface, especially at the interface between subunits. Can bind around 60 Ca(2+) ions. Regulates the release of lumenal Ca(2+) via the calcium release channel RYR2; this plays an important role in triggering muscle contraction. Plays a role in excitation-contraction coupling in the heart and in regulating the rate of heart beats. The chain is Calsequestrin-2 (CASQ2) from Sus scrofa (Pig).